We begin with the raw amino-acid sequence, 312 residues long: Protoheme IX farnesyltransferase 2 (312 aa).

8 consecutive transmembrane segments (helical) span residues 31 to 51 (VMSLVIFTALVGLMIAPGHIH), 52 to 72 (PVLGFIAILCIAVGAGASGAL), 119 to 139 (ALVNWYAGGLLAFTIFFYVVI), 152 to 172 (IVIGGAAGALPPVVAWAAATG), 179 to 199 (LLLFLIIFFWTPPHFWALALF), 225 to 245 (ILLYTIVLVAIAAAPWPLGYF), 247 to 267 (WVYGVTSLILGAGMLVLAIEV), and 283 to 303 (LFAFSILYLFALFAVLLLDVV).

This sequence belongs to the UbiA prenyltransferase family. Protoheme IX farnesyltransferase subfamily.

It localises to the cell inner membrane. The catalysed reaction is heme b + (2E,6E)-farnesyl diphosphate + H2O = Fe(II)-heme o + diphosphate. The protein operates within porphyrin-containing compound metabolism; heme O biosynthesis; heme O from protoheme: step 1/1. Functionally, converts heme B (protoheme IX) to heme O by substitution of the vinyl group on carbon 2 of heme B porphyrin ring with a hydroxyethyl farnesyl side group. The polypeptide is Protoheme IX farnesyltransferase 2 (Nitrobacter winogradskyi (strain ATCC 25391 / DSM 10237 / CIP 104748 / NCIMB 11846 / Nb-255)).